We begin with the raw amino-acid sequence, 270 residues long: Undecaprenyl-diphosphatase (270 aa).

The next 8 membrane-spanning stretches (helical) occupy residues 1–21 (MDLF…FLPI), 39–59 (QGLV…MLYF), 87–107 (SHLV…GLAC), 114–134 (VARD…LLWW), 147–167 (ALSW…LIPG), 193–213 (FLMA…DLFA), 223–243 (FLGV…HGLL), and 250–270 (TMTP…ATLG).

Belongs to the UppP family.

The protein resides in the cell inner membrane. It catalyses the reaction di-trans,octa-cis-undecaprenyl diphosphate + H2O = di-trans,octa-cis-undecaprenyl phosphate + phosphate + H(+). Its function is as follows. Catalyzes the dephosphorylation of undecaprenyl diphosphate (UPP). Confers resistance to bacitracin. This Magnetococcus marinus (strain ATCC BAA-1437 / JCM 17883 / MC-1) protein is Undecaprenyl-diphosphatase.